Here is a 663-residue protein sequence, read N- to C-terminus: MDIEKRILELREILNYHSHKYYVEDAPEISDFEYDELYRELEKLEQERPDLITPDSPTQRIGGKPLEGFKKVVHAVQMQSLSDVFSREELLAFDRRVREAVGDDVEYVVEKKIDGLSVSLVYENGVFTRGATRGDGLVGEDVTQNLKTIRTIPLRLKRDLPLLEVRGEVFISKKDFIKINEEQEAAGQQLFANPRNAAAGSLRQLDPKVTSQRKLDIFVFNIQRIEGQSFKTHSETLEFLKELGFKTSPGYKVCKDINAVWEEINRIGEERGEIDFEIDGAVVKVNSLEQREILGSTIKAPRWAVAYKYPAEVKETVVKKITVNVGRTGVLTPIAIFDPVRLAGSTVSRATLHNMDYIKEKDIRIGDTVRIRKAGDIIPEVVDVVFEKRSGNEAEFNMPEQCPVCGADVVREEGEAAYRCTGIECSAQLYRKIVHFASRDAMNIEGLGPAIIEVLLEKGLIKEIADLYYLHKEKETLVNIERMGKKSVENLLASIEKSKQNNIDRLIFGFGIRHIGLRAAQLLSENFESLDALMNASAEDIMAIPEFGEKMAKSVEQFFRQKQNRDTVEKLKAAGVNTVSFGKKKIKDNRFEGKTFVLTGTLPSFTRKEAEEIIKSFGGKTSGSVSKKTDYVLAGEDAGSKLQKAKELGIEIIDEDKFRKMIE.

NAD(+) contacts are provided by residues 31 to 35 (DFEYD), 80 to 81 (SL), and Glu110. Lys112 functions as the N6-AMP-lysine intermediate in the catalytic mechanism. Positions 133, 168, 284, and 308 each coordinate NAD(+). Residues Cys402, Cys405, Cys420, and Cys425 each contribute to the Zn(2+) site. Residues 586–663 (IKDNRFEGKT…DEDKFRKMIE (78 aa)) form the BRCT domain.

This sequence belongs to the NAD-dependent DNA ligase family. LigA subfamily. It depends on Mg(2+) as a cofactor. Mn(2+) is required as a cofactor.

It carries out the reaction NAD(+) + (deoxyribonucleotide)n-3'-hydroxyl + 5'-phospho-(deoxyribonucleotide)m = (deoxyribonucleotide)n+m + AMP + beta-nicotinamide D-nucleotide.. DNA ligase that catalyzes the formation of phosphodiester linkages between 5'-phosphoryl and 3'-hydroxyl groups in double-stranded DNA using NAD as a coenzyme and as the energy source for the reaction. It is essential for DNA replication and repair of damaged DNA. This Acetivibrio thermocellus (strain ATCC 27405 / DSM 1237 / JCM 9322 / NBRC 103400 / NCIMB 10682 / NRRL B-4536 / VPI 7372) (Clostridium thermocellum) protein is DNA ligase.